The chain runs to 502 residues: Lysine--tRNA ligase (502 aa).

E398 and E405 together coordinate Mg(2+).

The protein belongs to the class-II aminoacyl-tRNA synthetase family. As to quaternary structure, homodimer. Requires Mg(2+) as cofactor.

The protein localises to the cytoplasm. The catalysed reaction is tRNA(Lys) + L-lysine + ATP = L-lysyl-tRNA(Lys) + AMP + diphosphate. The polypeptide is Lysine--tRNA ligase (Thermosipho africanus (strain TCF52B)).